A 95-amino-acid polypeptide reads, in one-letter code: MAPVHVLCCVSVLLATFYLTPTESAGSLVSYTPNSCCYGFQQHPPPVQILKEWYPTSPACPKPGVILLTKRGRQICADPSKNWVRQLMQRLPAIA.

An N-terminal signal peptide occupies residues 1–24 (MAPVHVLCCVSVLLATFYLTPTES).

This Human herpesvirus 8 type P (isolate GK18) (HHV-8) protein is Protein K6 (K6).